The sequence spans 65 residues: Small, acid-soluble spore protein 2 (65 aa).

The protein belongs to the alpha/beta-type SASP family.

SASP are bound to spore DNA. They are double-stranded DNA-binding proteins that cause DNA to change to an a-like conformation. They protect the DNA backbone from chemical and enzymatic cleavage and are thus involved in dormant spore's high resistance to UV light. The chain is Small, acid-soluble spore protein 2 (sasP-2) from Bacillus cereus.